A 264-amino-acid chain; its full sequence is Indole-3-glycerol phosphate synthase (264 aa).

The protein belongs to the TrpC family.

The catalysed reaction is 1-(2-carboxyphenylamino)-1-deoxy-D-ribulose 5-phosphate + H(+) = (1S,2R)-1-C-(indol-3-yl)glycerol 3-phosphate + CO2 + H2O. Its pathway is amino-acid biosynthesis; L-tryptophan biosynthesis; L-tryptophan from chorismate: step 4/5. This Carboxydothermus hydrogenoformans (strain ATCC BAA-161 / DSM 6008 / Z-2901) protein is Indole-3-glycerol phosphate synthase.